The following is a 234-amino-acid chain: Ankyrin repeat-containing protein C6C3.08 (234 aa).

ANK repeat units lie at residues aspartate 36–glutamate 66, alanine 70–proline 100, glycine 106–arginine 135, glutamine 140–threonine 169, and tyrosine 173–lysine 203.

This is Ankyrin repeat-containing protein C6C3.08 from Schizosaccharomyces pombe (strain 972 / ATCC 24843) (Fission yeast).